Reading from the N-terminus, the 95-residue chain is Integration host factor subunit beta (95 aa).

Belongs to the bacterial histone-like protein family. Heterodimer of an alpha and a beta chain.

In terms of biological role, this protein is one of the two subunits of integration host factor, a specific DNA-binding protein that functions in genetic recombination as well as in transcriptional and translational control. This is Integration host factor subunit beta from Shewanella amazonensis (strain ATCC BAA-1098 / SB2B).